The sequence spans 146 residues: Hemoglobin subunit beta (146 aa).

Positions 2-146 (FLTPEENGHV…VANALAHKYH (145 aa)) constitute a Globin domain. Threonine 12 carries the post-translational modification Phosphothreonine. Serine 44 carries the post-translational modification Phosphoserine. Position 59 is an N6-acetyllysine (lysine 59). Histidine 63 is a binding site for heme b. Lysine 82 bears the N6-acetyllysine mark. Residue histidine 92 coordinates heme b. The residue at position 93 (cysteine 93) is an S-nitrosocysteine. N6-acetyllysine is present on lysine 144.

The protein belongs to the globin family. In terms of assembly, heterotetramer of two alpha chains and two beta chains. Red blood cells.

In terms of biological role, involved in oxygen transport from the lung to the various peripheral tissues. In Hapalemur griseus (Gray gentle lemur), this protein is Hemoglobin subunit beta (HBB).